The chain runs to 229 residues: 2-C-methyl-D-erythritol 4-phosphate cytidylyltransferase (229 aa).

This sequence belongs to the IspD/TarI cytidylyltransferase family. IspD subfamily.

It catalyses the reaction 2-C-methyl-D-erythritol 4-phosphate + CTP + H(+) = 4-CDP-2-C-methyl-D-erythritol + diphosphate. It participates in isoprenoid biosynthesis; isopentenyl diphosphate biosynthesis via DXP pathway; isopentenyl diphosphate from 1-deoxy-D-xylulose 5-phosphate: step 2/6. Catalyzes the formation of 4-diphosphocytidyl-2-C-methyl-D-erythritol from CTP and 2-C-methyl-D-erythritol 4-phosphate (MEP). The chain is 2-C-methyl-D-erythritol 4-phosphate cytidylyltransferase from Clostridium botulinum (strain Okra / Type B1).